Reading from the N-terminus, the 150-residue chain is Ribonuclease H (150 aa).

The region spanning 1–142 (MSDSVELFTD…ADQLANRGVD (142 aa)) is the RNase H type-1 domain. The Mg(2+) site is built by aspartate 10, glutamate 48, aspartate 70, and aspartate 134.

Belongs to the RNase H family. Monomer. It depends on Mg(2+) as a cofactor.

Its subcellular location is the cytoplasm. The catalysed reaction is Endonucleolytic cleavage to 5'-phosphomonoester.. In terms of biological role, endonuclease that specifically degrades the RNA of RNA-DNA hybrids. The sequence is that of Ribonuclease H from Pseudomonas syringae pv. syringae (strain B728a).